A 495-amino-acid polypeptide reads, in one-letter code: Cobyric acid synthase (495 aa).

Residues 262–445 (CLEIAVIRLP…LHGLFDNHRW (184 aa)) enclose the GATase cobBQ-type domain. C340 functions as the Nucleophile in the catalytic mechanism. The active site involves H437.

It belongs to the CobB/CobQ family. CobQ subfamily.

Its pathway is cofactor biosynthesis; adenosylcobalamin biosynthesis. Its function is as follows. Catalyzes amidations at positions B, D, E, and G on adenosylcobyrinic A,C-diamide. NH(2) groups are provided by glutamine, and one molecule of ATP is hydrogenolyzed for each amidation. In Synechococcus sp. (strain JA-3-3Ab) (Cyanobacteria bacterium Yellowstone A-Prime), this protein is Cobyric acid synthase.